Here is a 400-residue protein sequence, read N- to C-terminus: Protein transport protein HofC homolog (400 aa).

The next 3 helical transmembrane spans lie at 165-185 (YPII…HFVL), 209-229 (LADF…LLAI), and 370-390 (LLII…LPIF).

This sequence belongs to the GSP F family.

It localises to the cell inner membrane. The chain is Protein transport protein HofC homolog (hofC) from Escherichia coli (strain K12).